The primary structure comprises 693 residues: Kinesin-like protein KIFC1 (693 aa).

Disordered regions lie at residues 1–24 and 48–156; these read MRGR…VRTT and VKSS…KRPA. Composition is skewed to low complexity over residues 49–59 and 127–138; these read KSSSRLPLPGS and QKPAPAAPAQKP. 2 positions are modified to phosphoserine: S52 and S59. Residues 165–334 are a coiled coil; the sequence is DLHEELKQYR…QELKGNIRVF (170 aa). In terms of domain architecture, Kinesin motor spans 330-683; it reads NIRVFCRVRP…LRFASKVNQC (354 aa). A Phosphothreonine modification is found at T379. ATP is bound at residue 430-437; it reads GQTGSGKT.

Belongs to the TRAFAC class myosin-kinesin ATPase superfamily. Kinesin family. NCD subfamily. As to quaternary structure, binds NUBP1 and NUBP2. Interacts with PPP1R42.

The protein resides in the nucleus. It localises to the cytoplasm. The protein localises to the cytoskeleton. Its subcellular location is the microtubule organizing center. It is found in the centrosome. The protein resides in the spindle. It localises to the early endosome. Functionally, minus end-directed microtubule-dependent motor required for bipolar spindle formation. May contribute to movement of early endocytic vesicles. Regulates cilium formation and structure. This is Kinesin-like protein KIFC1 from Rattus norvegicus (Rat).